The chain runs to 206 residues: Superoxide dismutase [Mn] (206 aa).

The Mn(2+) site is built by H27, H82, D168, and H172.

Belongs to the iron/manganese superoxide dismutase family. As to quaternary structure, homodimer. Mn(2+) serves as cofactor.

It carries out the reaction 2 superoxide + 2 H(+) = H2O2 + O2. In terms of biological role, destroys superoxide anion radicals which are normally produced within the cells and which are toxic to biological systems. This is Superoxide dismutase [Mn] (sodA) from Salmonella typhi.